Reading from the N-terminus, the 187-residue chain is Pre-mRNA-splicing factor cwf7 (187 aa).

It belongs to the SPF27 family. In terms of assembly, belongs to the 40S cdc5-associated complex (or cwf complex), a spliceosome sub-complex reminiscent of a late-stage spliceosome composed of the U2, U5 and U6 snRNAs and at least brr2, cdc5, cwf2/prp3, cwf3/syf1, cwf4/syf3, cwf5/ecm2, spp42/cwf6, cwf7/spf27, cwf8, cwf9, cwf10, cwf11, cwf12, prp45/cwf13, cwf14, cwf15, cwf16, cwf17, cwf18, cwf19, cwf20, cwf21, cwf22, cwf23, cwf24, cwf25, cwf26, cyp7/cwf27, cwf28, cwf29/ist3, lea1, msl1, prp5/cwf1, prp10, prp12/sap130, prp17, prp22, sap61, sap62, sap114, sap145, slu7, smb1, smd1, smd3, smf1, smg1 and syf2.

The protein resides in the nucleus. Functionally, involved in mRNA splicing. The polypeptide is Pre-mRNA-splicing factor cwf7 (cwf7) (Schizosaccharomyces pombe (strain 972 / ATCC 24843) (Fission yeast)).